A 161-amino-acid chain; its full sequence is Dihydrofolate reductase (161 aa).

Residues 1–160 (MTMVGLIWAQ…LRYRLYSYHR (160 aa)) enclose the DHFR domain. 7 to 9 (IWA) lines the substrate pocket. Residues 8-9 (WA) and 16-21 (IGRGGD) contribute to the NADP(+) site. Substrate contacts are provided by D29 and R34. NADP(+) is bound at residue 45–48 (GRRT). A substrate-binding site is contributed by R62. Residues 67-70 (LSRQ), G82, and 96-101 (IGGGQV) contribute to the NADP(+) site. The substrate site is built by Y102 and T115.

The protein belongs to the dihydrofolate reductase family.

The catalysed reaction is (6S)-5,6,7,8-tetrahydrofolate + NADP(+) = 7,8-dihydrofolate + NADPH + H(+). Its pathway is cofactor biosynthesis; tetrahydrofolate biosynthesis; 5,6,7,8-tetrahydrofolate from 7,8-dihydrofolate: step 1/1. Its function is as follows. Key enzyme in folate metabolism. Catalyzes an essential reaction for de novo glycine and purine synthesis, and for DNA precursor synthesis. This chain is Dihydrofolate reductase (folA), found in Mycobacterium tuberculosis (strain CDC 1551 / Oshkosh).